Reading from the N-terminus, the 434-residue chain is UDP-N-acetylmuramoylalanine--D-glutamate ligase (434 aa).

Position 113-119 (G113–T119) interacts with ATP.

This sequence belongs to the MurCDEF family.

The protein resides in the cytoplasm. It carries out the reaction UDP-N-acetyl-alpha-D-muramoyl-L-alanine + D-glutamate + ATP = UDP-N-acetyl-alpha-D-muramoyl-L-alanyl-D-glutamate + ADP + phosphate + H(+). It functions in the pathway cell wall biogenesis; peptidoglycan biosynthesis. Its function is as follows. Cell wall formation. Catalyzes the addition of glutamate to the nucleotide precursor UDP-N-acetylmuramoyl-L-alanine (UMA). This Pasteurella multocida (strain Pm70) protein is UDP-N-acetylmuramoylalanine--D-glutamate ligase.